The chain runs to 372 residues: Isoliquiritigenin 2'-O-methyltransferase (372 aa).

S-adenosyl-L-methionine is bound by residues G217, D240, D260, M261, and K274. H278 serves as the catalytic Proton acceptor.

Belongs to the class I-like SAM-binding methyltransferase superfamily. Cation-independent O-methyltransferase family. COMT subfamily. As to quaternary structure, monomer. Homodimer. In terms of tissue distribution, roots (at protein level). Expressed mainly in roots, and to a lesser extent in root nodules. In the roots, expression is not detected in the root tip or the cells immediately behind the tip, but is detected in tissues starting 1.5-2.0 mm distal to the root tip. Detected in the epidermal and cortical cells of 2 day old roots, with lower levels in vascular tissue.

The enzyme catalyses isoliquiritigenin + S-adenosyl-L-methionine = 2'-O-methylisoliquiritigenin + S-adenosyl-L-homocysteine + H(+). The catalysed reaction is licodione + S-adenosyl-L-methionine = 2'-O-methyllicodione + S-adenosyl-L-homocysteine + H(+). With respect to regulation, inhibited by 1 mM Co(2+), Cu(2+), Zn(2+) or Fe(2+). Non-competitively inhibited by S-adenosyl-L-homocysteine. Competitively inhibited by 2'-O-methylisoliquiritigenin. In terms of biological role, methylates the 2'-hydroxyl of isoliquiritigenin and licodione. Does not methylate narigenin chalcone, caffeic acid or daidzein. Involved in the root nodulation initiation by promoting the biosynthesis of nod-inducing molecules. This chain is Isoliquiritigenin 2'-O-methyltransferase, found in Medicago sativa (Alfalfa).